The sequence spans 103 residues: Large ribosomal subunit protein bL21 (103 aa).

Belongs to the bacterial ribosomal protein bL21 family. As to quaternary structure, part of the 50S ribosomal subunit. Contacts protein L20.

Its function is as follows. This protein binds to 23S rRNA in the presence of protein L20. The polypeptide is Large ribosomal subunit protein bL21 (Aromatoleum aromaticum (strain DSM 19018 / LMG 30748 / EbN1) (Azoarcus sp. (strain EbN1))).